A 142-amino-acid polypeptide reads, in one-letter code: Galactose-binding lectin l-1 (142 aa).

The Galectin domain occupies 3-134 (FVEVKNLIMK…DATVKNISVN (132 aa)). An a beta-D-galactoside-binding site is contributed by 68 to 74 (WQEEQRD). Asparagine 130 carries an N-linked (GlcNAc...) asparagine glycan.

As to quaternary structure, homodimer. In terms of processing, the N-terminus is blocked. Skin; highest expression in that of individuals showing resistance to infectious disease.

Its subcellular location is the secreted. Its function is as follows. Involved in host defense at the body surface. Causes agglutination of the Gram-positive bacterium S.difficile. Possesses calcium-independent hemagglutinating activity. The chain is Galactose-binding lectin l-1 from Anguilla japonica (Japanese eel).